The following is a 538-amino-acid chain: Chaperonin GroEL 1 (538 aa).

ATP-binding positions include 29–32 (TLGP), 86–90 (DGTTT), Gly413, and Asp494.

This sequence belongs to the chaperonin (HSP60) family. In terms of assembly, forms a cylinder of 14 subunits composed of two heptameric rings stacked back-to-back. Interacts with the co-chaperonin GroES.

It localises to the cytoplasm. It carries out the reaction ATP + H2O + a folded polypeptide = ADP + phosphate + an unfolded polypeptide.. In terms of biological role, together with its co-chaperonin GroES, plays an essential role in assisting protein folding. The GroEL-GroES system forms a nano-cage that allows encapsulation of the non-native substrate proteins and provides a physical environment optimized to promote and accelerate protein folding. The chain is Chaperonin GroEL 1 from Mycolicibacterium paratuberculosis (strain ATCC BAA-968 / K-10) (Mycobacterium paratuberculosis).